A 140-amino-acid chain; its full sequence is Large ribosomal subunit protein bL17 (140 aa).

Positions 119 to 133 are enriched in basic and acidic residues; it reads DPSAKGAADRARLEE. Residues 119–140 are disordered; sequence DPSAKGAADRARLEEEGGMTEE.

The protein belongs to the bacterial ribosomal protein bL17 family. As to quaternary structure, part of the 50S ribosomal subunit. Contacts protein L32.

This Maricaulis maris (strain MCS10) (Caulobacter maris) protein is Large ribosomal subunit protein bL17.